Reading from the N-terminus, the 484-residue chain is Phosphomethylpyrimidine synthase (484 aa).

Residues asparagine 97, methionine 126, tyrosine 156, histidine 192, 212–214 (SRG), 253–256 (DSLR), and glutamate 292 each bind substrate. A Zn(2+)-binding site is contributed by histidine 296. Tyrosine 319 contacts substrate. Histidine 360 contributes to the Zn(2+) binding site. [4Fe-4S] cluster contacts are provided by cysteine 440, cysteine 443, and cysteine 448.

This sequence belongs to the ThiC family. It depends on [4Fe-4S] cluster as a cofactor.

It catalyses the reaction 5-amino-1-(5-phospho-beta-D-ribosyl)imidazole + S-adenosyl-L-methionine = 4-amino-2-methyl-5-(phosphooxymethyl)pyrimidine + CO + 5'-deoxyadenosine + formate + L-methionine + 3 H(+). It functions in the pathway cofactor biosynthesis; thiamine diphosphate biosynthesis. In terms of biological role, catalyzes the synthesis of the hydroxymethylpyrimidine phosphate (HMP-P) moiety of thiamine from aminoimidazole ribotide (AIR) in a radical S-adenosyl-L-methionine (SAM)-dependent reaction. This chain is Phosphomethylpyrimidine synthase, found in Synechococcus sp. (strain CC9605).